A 148-amino-acid polypeptide reads, in one-letter code: Large ribosomal subunit protein bL9 (148 aa).

This sequence belongs to the bacterial ribosomal protein bL9 family.

Binds to the 23S rRNA. The sequence is that of Large ribosomal subunit protein bL9 from Staphylococcus haemolyticus (strain JCSC1435).